The chain runs to 149 residues: Small ribosomal subunit protein uS19 (149 aa).

The protein belongs to the universal ribosomal protein uS19 family.

Its function is as follows. Protein S19 forms a complex with S13 that binds strongly to the 16S ribosomal RNA. This Methanopyrus kandleri (strain AV19 / DSM 6324 / JCM 9639 / NBRC 100938) protein is Small ribosomal subunit protein uS19.